The chain runs to 548 residues: tRNA (guanine(26)-N(2))-dimethyltransferase (548 aa).

The 441-residue stretch at 30–470 (ASLTEGSAII…APWSFVWDVL (441 aa)) folds into the Trm1 methyltransferase domain. Residues R57, R137, D155, and A186 each contribute to the S-adenosyl-L-methionine site. Zn(2+)-binding residues include C317, C320, C354, and C357. Residues 523–548 (QMNPTENWGPKSKPGKRTIAEVDSKS) form a disordered region.

Belongs to the class I-like SAM-binding methyltransferase superfamily. Trm1 family.

The protein resides in the mitochondrion. It localises to the nucleus. It is found in the cytoplasm. It catalyses the reaction guanosine(26) in tRNA + 2 S-adenosyl-L-methionine = N(2)-dimethylguanosine(26) in tRNA + 2 S-adenosyl-L-homocysteine + 2 H(+). Its function is as follows. Dimethylates a single guanine residue at position 26 of nuclear- and mitochondrial-encoded tRNAs using S-adenosyl-L-methionine as donor of the methyl groups. Also has tRNA strand annealing and dissociation activity independently of its tRNA guanine-dimethyltransferase activity. The polypeptide is tRNA (guanine(26)-N(2))-dimethyltransferase (Schizosaccharomyces pombe (strain 972 / ATCC 24843) (Fission yeast)).